The following is a 347-amino-acid chain: uncharacterized protein (347 aa).

This is an uncharacterized protein from Saccharomyces cerevisiae (strain ATCC 204508 / S288c) (Baker's yeast).